Here is a 189-residue protein sequence, read N- to C-terminus: Effector protein NleF (189 aa).

Residues 186–189 (LQCG) are interaction with host caspases.

In terms of assembly, monomer. Interacts (via C-terminus) with human CASP4, CASP8 and CASP9.

Its subcellular location is the secreted. The protein resides in the host cytoplasm. Functionally, effector protein that alters host cell physiology and promotes bacterial survival in host tissues. Inhibits the catalytic activity of human CASP4, CASP8 and CASP9, and thereby inhibits apoptosis of infected host cells. In Escherichia coli O157:H7, this protein is Effector protein NleF (nleF).